The following is a 436-amino-acid chain: Ribosome biogenesis protein WDR12 homolog (436 aa).

The segment at 13-97 (VRVRFLTKLP…ERVLELEYVK (85 aa)) is ubiquitin-like (UBL) domain. 7 WD repeats span residues 109-147 (PHDD…THIL), 149-193 (GHSD…SVPK), 203-242 (GHTS…EDGD), 273-311 (GHTQ…ETWN), 313-353 (VSGK…TLAP), 359-399 (SHKS…PLAS), and 402-436 (SHKD…IEIV). Positions 240–262 (DGDTVSVKKRRTNSDSSGPEESL) are disordered.

It belongs to the WD repeat WDR12/YTM1 family.

It is found in the nucleus. The protein resides in the nucleolus. The protein localises to the nucleoplasm. Functionally, required for maturation of ribosomal RNAs and formation of the large ribosomal subunit. The chain is Ribosome biogenesis protein WDR12 homolog from Oryza sativa subsp. japonica (Rice).